A 220-amino-acid chain; its full sequence is Glutathione S-transferase (220 aa).

The 77-residue stretch at 1–77 (MLKLHGFSVS…YIEQTQSGKA (77 aa)) folds into the GST N-terminal domain. Glutathione-binding positions include Y12, V49, and 61 to 62 (ET). The 130-residue stretch at 82-211 (DPFEQAKVRE…ADKEASMPAF (130 aa)) folds into the GST C-terminal domain.

It belongs to the GST superfamily. Monomer and homodimer.

Its subcellular location is the cytoplasm. It carries out the reaction RX + glutathione = an S-substituted glutathione + a halide anion + H(+). Conjugation of reduced glutathione to a wide number of exogenous and endogenous hydrophobic electrophiles. The protein is Glutathione S-transferase of Pseudomonas putida (strain ATCC 700007 / DSM 6899 / JCM 31910 / BCRC 17059 / LMG 24140 / F1).